An 84-amino-acid polypeptide reads, in one-letter code: Large ribosomal subunit protein bL27 (84 aa).

Residues 1–21 (MAHKKGGGSTKNGRDSNPKYL) are disordered.

It belongs to the bacterial ribosomal protein bL27 family.

The sequence is that of Large ribosomal subunit protein bL27 from Chlorobium luteolum (strain DSM 273 / BCRC 81028 / 2530) (Pelodictyon luteolum).